The primary structure comprises 620 residues: Probable indole-3-acetic acid-amido synthetase GH3.7 (620 aa).

This sequence belongs to the IAA-amido conjugating enzyme family. In terms of tissue distribution, ubiquitous.

Its function is as follows. May catalyze the synthesis of indole-3-acetic acid (IAA)-amino acid conjugates, providing a mechanism for the plant to cope with the presence of excess auxin. This Oryza sativa subsp. japonica (Rice) protein is Probable indole-3-acetic acid-amido synthetase GH3.7 (GH3.7).